Reading from the N-terminus, the 475-residue chain is L-ornithine N(5)-monooxygenase (475 aa).

FAD is bound by residues 65–73 (ERQPEFGWH) and glutamine 84. Lysine 89 serves as a coordination point for substrate. Valine 150 is a binding site for FAD. 238–241 (GGQS) contributes to the NADP(+) binding site. Residues 277–280 (NEIF) and asparagine 307 contribute to the substrate site. 307 to 309 (NYG) lines the NADP(+) pocket. 446-448 (SLL) is a binding site for FAD. A substrate-binding site is contributed by serine 449.

It belongs to the lysine N(6)-hydroxylase/L-ornithine N(5)-oxygenase family. In terms of assembly, homotetramer. It depends on FAD as a cofactor.

The enzyme catalyses L-ornithine + NADPH + O2 = N(5)-hydroxy-L-ornithine + NADP(+) + H2O. The catalysed reaction is L-ornithine + NADH + O2 = N(5)-hydroxy-L-ornithine + NAD(+) + H2O. The protein operates within siderophore biosynthesis. L-ornithine N(5)-monooxygenase; part of the gene cluster that mediates the biosynthesis of hydroxamate-containing siderophores that play a critical role in virulence via intracellular iron acquisition during macrophage infection. SID1 catalyzes the conversion of L-ornithine to N(5)-hydroxyornithine, the first step in the biosynthesis of all hydroxamate-containing siderophores. The polypeptide is L-ornithine N(5)-monooxygenase (Ajellomyces capsulatus (Darling's disease fungus)).